A 174-amino-acid polypeptide reads, in one-letter code: Probable N-acetyltransferase Rv2775 (174 aa).

An N-acetyltransferase domain is found at 6–172 (IRIRAAKPID…VGYRLYRSAP (167 aa)).

Belongs to the acetyltransferase family.

This Mycobacterium tuberculosis (strain ATCC 25618 / H37Rv) protein is Probable N-acetyltransferase Rv2775.